A 121-amino-acid polypeptide reads, in one-letter code: Urotensin-2 (121 aa).

The first 19 residues, 1–19 (MSKLVPCLLLLGCLGLLFA), serve as a signal peptide directing secretion. Positions 20–106 (LPVPDSRKEP…HLLARIKKPY (87 aa)) are excised as a propeptide. Cysteines 115 and 120 form a disulfide.

This sequence belongs to the urotensin-2 family.

It localises to the secreted. Functionally, highly potent vasoconstrictor. This Sus scrofa (Pig) protein is Urotensin-2 (UTS2).